The sequence spans 298 residues: Pyridoxal 5'-phosphate synthase subunit PdxS (298 aa).

Residue D24 coordinates D-ribose 5-phosphate. The active-site Schiff-base intermediate with D-ribose 5-phosphate is K81. Residue G153 participates in D-ribose 5-phosphate binding. R165 is a binding site for D-glyceraldehyde 3-phosphate. Residues G214 and 235 to 236 (GS) contribute to the D-ribose 5-phosphate site.

This sequence belongs to the PdxS/SNZ family. As to quaternary structure, in the presence of PdxT, forms a dodecamer of heterodimers.

The catalysed reaction is aldehydo-D-ribose 5-phosphate + D-glyceraldehyde 3-phosphate + L-glutamine = pyridoxal 5'-phosphate + L-glutamate + phosphate + 3 H2O + H(+). It participates in cofactor biosynthesis; pyridoxal 5'-phosphate biosynthesis. Functionally, catalyzes the formation of pyridoxal 5'-phosphate from ribose 5-phosphate (RBP), glyceraldehyde 3-phosphate (G3P) and ammonia. The ammonia is provided by the PdxT subunit. Can also use ribulose 5-phosphate and dihydroxyacetone phosphate as substrates, resulting from enzyme-catalyzed isomerization of RBP and G3P, respectively. The sequence is that of Pyridoxal 5'-phosphate synthase subunit PdxS from Halalkalibacterium halodurans (strain ATCC BAA-125 / DSM 18197 / FERM 7344 / JCM 9153 / C-125) (Bacillus halodurans).